Reading from the N-terminus, the 96-residue chain is Aspartyl/glutamyl-tRNA(Asn/Gln) amidotransferase subunit C (96 aa).

It belongs to the GatC family. In terms of assembly, heterotrimer of A, B and C subunits.

It carries out the reaction L-glutamyl-tRNA(Gln) + L-glutamine + ATP + H2O = L-glutaminyl-tRNA(Gln) + L-glutamate + ADP + phosphate + H(+). The enzyme catalyses L-aspartyl-tRNA(Asn) + L-glutamine + ATP + H2O = L-asparaginyl-tRNA(Asn) + L-glutamate + ADP + phosphate + 2 H(+). Allows the formation of correctly charged Asn-tRNA(Asn) or Gln-tRNA(Gln) through the transamidation of misacylated Asp-tRNA(Asn) or Glu-tRNA(Gln) in organisms which lack either or both of asparaginyl-tRNA or glutaminyl-tRNA synthetases. The reaction takes place in the presence of glutamine and ATP through an activated phospho-Asp-tRNA(Asn) or phospho-Glu-tRNA(Gln). This is Aspartyl/glutamyl-tRNA(Asn/Gln) amidotransferase subunit C from Exiguobacterium sp. (strain ATCC BAA-1283 / AT1b).